The sequence spans 477 residues: Aspartyl/glutamyl-tRNA(Asn/Gln) amidotransferase subunit B (477 aa).

Belongs to the GatB/GatE family. GatB subfamily. As to quaternary structure, heterotrimer of A, B and C subunits.

It catalyses the reaction L-glutamyl-tRNA(Gln) + L-glutamine + ATP + H2O = L-glutaminyl-tRNA(Gln) + L-glutamate + ADP + phosphate + H(+). It carries out the reaction L-aspartyl-tRNA(Asn) + L-glutamine + ATP + H2O = L-asparaginyl-tRNA(Asn) + L-glutamate + ADP + phosphate + 2 H(+). Functionally, allows the formation of correctly charged Asn-tRNA(Asn) or Gln-tRNA(Gln) through the transamidation of misacylated Asp-tRNA(Asn) or Glu-tRNA(Gln) in organisms which lack either or both of asparaginyl-tRNA or glutaminyl-tRNA synthetases. The reaction takes place in the presence of glutamine and ATP through an activated phospho-Asp-tRNA(Asn) or phospho-Glu-tRNA(Gln). The chain is Aspartyl/glutamyl-tRNA(Asn/Gln) amidotransferase subunit B from Streptococcus sanguinis (strain SK36).